A 297-amino-acid chain; its full sequence is Protease HtpX homolog (297 aa).

Transmembrane regions (helical) follow at residues 5 to 25 (IFLF…VLSI) and 44 to 64 (IVAL…MSLL). His155 serves as a coordination point for Zn(2+). Residue Glu156 is part of the active site. His159 is a binding site for Zn(2+). Helical transmembrane passes span 170-190 (LLQG…AWAV) and 204-224 (FIAV…VVFA). Glu230 is a binding site for Zn(2+).

It belongs to the peptidase M48B family. Zn(2+) is required as a cofactor.

It is found in the cell membrane. This chain is Protease HtpX homolog, found in Bacillus licheniformis (strain ATCC 14580 / DSM 13 / JCM 2505 / CCUG 7422 / NBRC 12200 / NCIMB 9375 / NCTC 10341 / NRRL NRS-1264 / Gibson 46).